Here is a 505-residue protein sequence, read N- to C-terminus: Prenylcysteine oxidase 1 (505 aa).

A signal peptide spans 1–27; sequence MGRVVAELVSSLLGLWLLLCSCGCPEG. Residues Asn-196, Asn-323, and Asn-353 are each glycosylated (N-linked (GlcNAc...) asparagine).

It belongs to the prenylcysteine oxidase family. FAD is required as a cofactor. As to expression, widely expressed.

The protein localises to the lysosome. The catalysed reaction is an S-polyprenyl-L-cysteine + O2 + H2O = a polyprenal + L-cysteine + H2O2. It catalyses the reaction S-(2E,6E)-farnesyl-L-cysteine + O2 + H2O = (2E,6E)-farnesal + L-cysteine + H2O2. It carries out the reaction [(2E,6E,10E)-geranylgeranyl]-L-cysteine + O2 + H2O = (2E,6E,10E)-geranylgeranial + L-cysteine + H2O2. Functionally, prenylcysteine oxidase that cleaves the thioether bond of prenyl-L-cysteines, such as farnesylcysteine and geranylgeranylcysteine. Only active against free prenylcysteines and not prenylcysteine residues within prenylated proteins or peptides. Involved in the final step in the degradation of prenylated proteins, by degrading prenylcysteines after the protein has been degraded. The sequence is that of Prenylcysteine oxidase 1 from Homo sapiens (Human).